Here is a 493-residue protein sequence, read N- to C-terminus: Ribulose bisphosphate carboxylase large chain (493 aa).

Residue Asn-132 coordinates substrate. An S-nitrosocysteine modification is found at Cys-181. Thr-182 is a substrate binding site. The active-site Proton acceptor is Lys-184. Lys-186 is a substrate binding site. Mg(2+)-binding residues include Lys-210, Asp-212, and Glu-213. N6-carboxylysine is present on Lys-210. The Proton acceptor role is filled by His-302. Substrate-binding residues include Arg-303, His-335, and Ser-387. Cys-460 bears the S-nitrosocysteine mark.

The protein belongs to the RuBisCO large chain family. Type I subfamily. In terms of assembly, heterohexadecamer of 8 large chains and 8 small chains. The cofactor is Mg(2+).

It localises to the plastid. The protein resides in the chloroplast. It catalyses the reaction 2 (2R)-3-phosphoglycerate + 2 H(+) = D-ribulose 1,5-bisphosphate + CO2 + H2O. It carries out the reaction D-ribulose 1,5-bisphosphate + O2 = 2-phosphoglycolate + (2R)-3-phosphoglycerate + 2 H(+). In terms of biological role, ruBisCO catalyzes two reactions: the carboxylation of D-ribulose 1,5-bisphosphate, the primary event in carbon dioxide fixation, as well as the oxidative fragmentation of the pentose substrate in the photorespiration process. Both reactions occur simultaneously and in competition at the same active site. Carbon dioxide and oxygen bind in the same pocket of the enzyme in a similar manner. The sequence is that of Ribulose bisphosphate carboxylase large chain from Galdieria sulphuraria (Red alga).